Consider the following 1256-residue polypeptide: Muramidase-released protein (1256 aa).

Positions 1-47 (MRRSNKKSFDWYGTKQQFSIRKYHFGAASVLLGVSLVLGAGAQVVKA) are cleaved as a signal peptide. Small repeat units lie at residues 663–681 (KTTGTVVAGTTTVKYVYEK) and 839–861 (KTDGEENGKVIEGTITVTYVYQK). 3 disordered regions span residues 873–949 (PETD…VDTP), 967–994 (GNPIAPQEEGTKPNKSIPGYEFTGKTVT), and 1028–1049 (KEPVTDTPTSPEGTPYDTTDNK). One copy of the Large repeat lies at 953-1006 (VPVKKVVTNHVDEEGNPIAPQEEGTKPNKSIPGYEFTGKTVTDEDGNTTHIYKK). A compositionally biased stretch (polar residues) spans 1033–1045 (DTPTSPEGTPYDT). Residues 1064-1084 (RVDGTENGKVVEGETVVTYVY) form a Small repeat. Large repeat units follow at residues 1089–1142 (TPAK…IYKK) and 1143–1195 (TPAK…IYRK). The tract at residues 1102–1137 (EGNPVAPQEEGTKPNKSIPGYEFTGKTVTDEDGNTT) is disordered. Residues 1196-1229 (LSNKPTTPEKETPAKPQAGKTASGKAQLPNTGEA) are disordered. Positions 1223–1227 (LPNTG) match the LPXTG sorting signal motif. Position 1226 is a pentaglycyl murein peptidoglycan amidated threonine (threonine 1226). A propeptide spans 1227-1256 (GEASSVAGALGTAMLVATLAFARKRRRNED) (removed by sortase).

The protein resides in the secreted. It localises to the cell wall. This chain is Muramidase-released protein (mrp), found in Streptococcus suis.